We begin with the raw amino-acid sequence, 204 residues long: Thymidylate kinase (204 aa).

ATP is bound at residue 7–14 (GGEGVGKT).

It belongs to the thymidylate kinase family.

It catalyses the reaction dTMP + ATP = dTDP + ADP. Its function is as follows. Phosphorylation of dTMP to form dTDP in both de novo and salvage pathways of dTTP synthesis. This Synechococcus sp. (strain JA-3-3Ab) (Cyanobacteria bacterium Yellowstone A-Prime) protein is Thymidylate kinase.